The primary structure comprises 104 residues: Gallinacin-11 (104 aa).

The first 22 residues, 1 to 22 (MKLFSCLMALLLFLLQAVPGLG), serve as a signal peptide directing secretion. Intrachain disulfides connect C30-C60, C37-C53, and C43-C61.

It belongs to the beta-defensin family. Detected in outer membrane of the vitelline layer of the egg (at protein level). Expressed in the liver, gall bladder, kidney, testis, ovary and male and female reproductive tracts. Expressed in the ovarian stroma, but not in the ovarian follicles. No expression is detected in bone marrow.

It is found in the secreted. It localises to the cytoplasmic granule. In terms of biological role, has bactericidal activity. The sequence is that of Gallinacin-11 (GAL11) from Gallus gallus (Chicken).